Consider the following 538-residue polypeptide: Fructooligosaccharide ABC transporter substrate-binding protein FusA (538 aa).

The signal sequence occupies residues 1–22 (MKFKTFSKSAVLLTASLAVLAA). C23 carries the N-palmitoyl cysteine lipid modification. A lipid anchor (S-diacylglycerol cysteine) is attached at C23. Substrate is bound at residue E167. Ca(2+) contacts are provided by D215, N217, N219, E221, D223, and E224. Position 235 (N235) interacts with substrate. Ca(2+) contacts are provided by D263, F264, D267, and N268. W314, N318, K353, W384, R419, and E423 together coordinate substrate.

It belongs to the bacterial solute-binding protein 1 family. In terms of assembly, the complex is composed of two ATP-binding proteins (MsmK), two transmembrane proteins (FusB and FusC) and a solute-binding protein (FusA).

It is found in the cell membrane. Part of the ABC transporter complex FusABC-MsmK involved in short- and long-chain fructooligosaccharide (FOS) import. Required for the utilization of long-chain FOSs. Binds kestose, nystose, fructofuranosyl-nystose and inulin, but not sucrose. Has a preference for long-chain FOSs (tetrasaccharides and larger). This Streptococcus pneumoniae serotype 4 (strain ATCC BAA-334 / TIGR4) protein is Fructooligosaccharide ABC transporter substrate-binding protein FusA.